The chain runs to 681 residues: Cobalamin-dependent radical SAM methyltransferase TokK (681 aa).

The 144-residue stretch at 1–144 (MSAELASRGR…ATRLSDHPDY (144 aa)) folds into the B12-binding domain. Cob(II)alamin contacts are provided by N18, S72, Y74, V75, H103, G126, and E127. The Radical SAM core domain occupies 192-417 (RGLRFYALWE…RMYVERPGTP (226 aa)). C206 and C210 together coordinate [4Fe-4S] cluster. F212 serves as a coordination point for 5'-deoxyadenosine. Residue C213 coordinates [4Fe-4S] cluster. Positions 214 and 249 each coordinate cob(II)alamin. 5'-deoxyadenosine-binding residues include Q312, E349, and G384.

The protein belongs to the methyltransferase superfamily. It depends on [4Fe-4S] cluster as a cofactor. Requires cob(II)alamin as cofactor.

It participates in antibiotic biosynthesis. Its function is as follows. Methyltransferase involved in the biosynthesis of the beta-lactam carbapenem antibiotic asparenomycin. Catalyzes three consecutive S-adenosyl-L-methionine-dependent methylations to build out the C6-isopropyl side chain in a stereocontrolled manner. The sequence is that of Cobalamin-dependent radical SAM methyltransferase TokK from Streptomyces tokunonensis.